The chain runs to 138 residues: Thyrotropin subunit beta (138 aa).

An N-terminal signal peptide occupies residues 1-20 (MSAAVLLSVLFALACGQAAS). 6 disulfide bridges follow: cysteine 22–cysteine 72, cysteine 36–cysteine 87, cysteine 39–cysteine 125, cysteine 47–cysteine 103, cysteine 51–cysteine 105, and cysteine 108–cysteine 115. N-linked (GlcNAc...) asparagine glycosylation occurs at asparagine 43. Residues 133-138 (LGGFSV) constitute a propeptide that is removed on maturation.

It belongs to the glycoprotein hormones subunit beta family. Heterodimer of a common alpha chain and a unique beta chain which confers biological specificity to thyrotropin, lutropin, follitropin and gonadotropin.

Its subcellular location is the secreted. Indispensable for the control of thyroid structure and metabolism. This is Thyrotropin subunit beta (Tshb) from Mus musculus (Mouse).